We begin with the raw amino-acid sequence, 114 residues long: Circadian clock oscillator protein KaiB (114 aa).

Belongs to the KaiB family. As to quaternary structure, may undergo a major conformational rearrangment; in the free state forms homooligomers. When bound to KaiC switches to a monomeric thioredoxin-fold (KaiB(fs)). The active oscillator complex is probably KaiC(6):KaiB(6).

Functionally, component of the KaiBC clock protein complex, which constitutes the main circadian regulator in cyanobacteria; it may modify the ATPase activity of KaiC. Its function is as follows. May be a metamorphic protein which reversibly switches between an inactive tetrameric fold and a rare, thioredoxin-like monomeric fold (KaiB(fs)). KaiB(fs) binds phospho-KaiC, and perhaps clock output effectors. The protein is Circadian clock oscillator protein KaiB of Prochlorococcus marinus (strain MIT 9211).